We begin with the raw amino-acid sequence, 206 residues long: MLSAQLDEYLAEMNLSATTEQKKQLVGFVEMLNKWNKAYNLTSIRDPQQMLIRHIMDSLAVSKHLVGERFIDVGTGPGLPGIPLAIMNPERSFVLLDSLGKRIRFQKQVQHELGIHNISSVESRVEAFEPEVKFDGVLSRAFASIEDMLHWCHHLPSETGCYYALKGQLADNEMANIPQGFEVTDIIELQVPRLDEQRHLLRVIKK.

Residues Gly-74, Leu-79, Val-125–Glu-126, and Arg-140 contribute to the S-adenosyl-L-methionine site.

The protein belongs to the methyltransferase superfamily. RNA methyltransferase RsmG family.

Its subcellular location is the cytoplasm. The enzyme catalyses guanosine(527) in 16S rRNA + S-adenosyl-L-methionine = N(7)-methylguanosine(527) in 16S rRNA + S-adenosyl-L-homocysteine. Functionally, specifically methylates the N7 position of guanine in position 527 of 16S rRNA. The protein is Ribosomal RNA small subunit methyltransferase G of Shewanella woodyi (strain ATCC 51908 / MS32).